Consider the following 600-residue polypeptide: 1-deoxy-D-xylulose-5-phosphate synthase (600 aa).

Thiamine diphosphate is bound by residues His-57 and 98–100; that span reads GHA. Residue Asp-125 coordinates Mg(2+). Thiamine diphosphate is bound by residues 126–127, Asn-155, Tyr-264, and Glu-343; that span reads AS. Asn-155 is a binding site for Mg(2+).

The protein belongs to the transketolase family. DXPS subfamily. As to quaternary structure, homodimer. It depends on Mg(2+) as a cofactor. Requires thiamine diphosphate as cofactor.

It catalyses the reaction D-glyceraldehyde 3-phosphate + pyruvate + H(+) = 1-deoxy-D-xylulose 5-phosphate + CO2. It functions in the pathway metabolic intermediate biosynthesis; 1-deoxy-D-xylulose 5-phosphate biosynthesis; 1-deoxy-D-xylulose 5-phosphate from D-glyceraldehyde 3-phosphate and pyruvate: step 1/1. Its function is as follows. Catalyzes the acyloin condensation reaction between C atoms 2 and 3 of pyruvate and glyceraldehyde 3-phosphate to yield 1-deoxy-D-xylulose-5-phosphate (DXP). The polypeptide is 1-deoxy-D-xylulose-5-phosphate synthase (Fusobacterium nucleatum subsp. nucleatum (strain ATCC 25586 / DSM 15643 / BCRC 10681 / CIP 101130 / JCM 8532 / KCTC 2640 / LMG 13131 / VPI 4355)).